Consider the following 228-residue polypeptide: MKRYMFGTLPRVQPKRCFQTAIGKESPKGNSEKDQLFENPFFQQLPSNVAAVYLNPVKFNPSENDVLCASLKIKSFETPKLDTFTDFICRTAYYMKIPIKGPRPLPNKVESWTLLRSPFIHKSSQENFERITHSRLIQLYSVNPVTLETFFSYLRKCNMWDLKLQAKAYEYESIDDALKNFESQSKSTDNFKELLNGPSKKDIITQNAEKLLRNDPIYKDLLKNSSRK.

A mitochondrion-targeting transit peptide spans 1–17; the sequence is MKRYMFGTLPRVQPKRC.

The protein belongs to the universal ribosomal protein uS10 family. In terms of assembly, component of the mitochondrial small ribosomal subunit (mt-SSU). Mature yeast 74S mitochondrial ribosomes consist of a small (37S) and a large (54S) subunit. The 37S small subunit contains a 15S ribosomal RNA (15S mt-rRNA) and at least 32 different proteins. The 54S large subunit contains a 21S rRNA (21S mt-rRNA) and at least 45 different proteins.

The protein resides in the mitochondrion. In terms of biological role, component of the mitochondrial ribosome (mitoribosome), a dedicated translation machinery responsible for the synthesis of mitochondrial genome-encoded proteins, including at least some of the essential transmembrane subunits of the mitochondrial respiratory chain. The mitoribosomes are attached to the mitochondrial inner membrane and translation products are cotranslationally integrated into the membrane. The protein is Small ribosomal subunit protein uS10m (rsm10) of Schizosaccharomyces pombe (strain 972 / ATCC 24843) (Fission yeast).